Here is a 109-residue protein sequence, read N- to C-terminus: Thiosulfate sulfurtransferase GlpE (109 aa).

In terms of domain architecture, Rhodanese spans 17 to 105 (HQQTAVLVDI…WHRHFPAEVA (89 aa)). The Cysteine persulfide intermediate role is filled by C65.

This sequence belongs to the GlpE family.

It localises to the cytoplasm. It catalyses the reaction thiosulfate + hydrogen cyanide = thiocyanate + sulfite + 2 H(+). The enzyme catalyses thiosulfate + [thioredoxin]-dithiol = [thioredoxin]-disulfide + hydrogen sulfide + sulfite + 2 H(+). Its function is as follows. Transferase that catalyzes the transfer of sulfur from thiosulfate to thiophilic acceptors such as cyanide or dithiols. May function in a CysM-independent thiosulfate assimilation pathway by catalyzing the conversion of thiosulfate to sulfite, which can then be used for L-cysteine biosynthesis. This chain is Thiosulfate sulfurtransferase GlpE, found in Klebsiella pneumoniae (strain 342).